A 269-amino-acid polypeptide reads, in one-letter code: Formamidopyrimidine-DNA glycosylase (269 aa).

The Schiff-base intermediate with DNA role is filled by Pro-2. The active-site Proton donor is the Glu-3. Lys-57 functions as the Proton donor; for beta-elimination activity in the catalytic mechanism. DNA contacts are provided by His-90, Arg-109, and Lys-150. The FPG-type zinc finger occupies 235 to 269 (QVYGRAGEPCRACGTPIESAKHGQRSTFFCPRCQR). Arg-259 functions as the Proton donor; for delta-elimination activity in the catalytic mechanism.

This sequence belongs to the FPG family. Monomer. Zn(2+) serves as cofactor.

It catalyses the reaction Hydrolysis of DNA containing ring-opened 7-methylguanine residues, releasing 2,6-diamino-4-hydroxy-5-(N-methyl)formamidopyrimidine.. The enzyme catalyses 2'-deoxyribonucleotide-(2'-deoxyribose 5'-phosphate)-2'-deoxyribonucleotide-DNA = a 3'-end 2'-deoxyribonucleotide-(2,3-dehydro-2,3-deoxyribose 5'-phosphate)-DNA + a 5'-end 5'-phospho-2'-deoxyribonucleoside-DNA + H(+). In terms of biological role, involved in base excision repair of DNA damaged by oxidation or by mutagenic agents. Acts as a DNA glycosylase that recognizes and removes damaged bases. Has a preference for oxidized purines, such as 7,8-dihydro-8-oxoguanine (8-oxoG). Has AP (apurinic/apyrimidinic) lyase activity and introduces nicks in the DNA strand. Cleaves the DNA backbone by beta-delta elimination to generate a single-strand break at the site of the removed base with both 3'- and 5'-phosphates. This chain is Formamidopyrimidine-DNA glycosylase, found in Serratia proteamaculans (strain 568).